The chain runs to 468 residues: 3-isopropylmalate dehydratase large subunit (468 aa).

[4Fe-4S] cluster is bound by residues Cys347, Cys407, and Cys410.

Belongs to the aconitase/IPM isomerase family. LeuC type 1 subfamily. In terms of assembly, heterodimer of LeuC and LeuD. It depends on [4Fe-4S] cluster as a cofactor.

The enzyme catalyses (2R,3S)-3-isopropylmalate = (2S)-2-isopropylmalate. It functions in the pathway amino-acid biosynthesis; L-leucine biosynthesis; L-leucine from 3-methyl-2-oxobutanoate: step 2/4. Catalyzes the isomerization between 2-isopropylmalate and 3-isopropylmalate, via the formation of 2-isopropylmaleate. The protein is 3-isopropylmalate dehydratase large subunit of Synechococcus elongatus (strain ATCC 33912 / PCC 7942 / FACHB-805) (Anacystis nidulans R2).